The sequence spans 231 residues: NADH-ubiquinone oxidoreductase chain 4 (231 aa).

The next 6 helical transmembrane spans lie at 1-21 (PIAG…YGII), 34-54 (LFLP…LTCL), 63-85 (IAYS…TPWG), 89-111 (AMAL…NTTY), 118-138 (ILIL…WWLL), and 156-176 (LLIM…LGLS).

It belongs to the complex I subunit 4 family.

The protein resides in the mitochondrion membrane. It catalyses the reaction a ubiquinone + NADH + 5 H(+)(in) = a ubiquinol + NAD(+) + 4 H(+)(out). Core subunit of the mitochondrial membrane respiratory chain NADH dehydrogenase (Complex I) that is believed to belong to the minimal assembly required for catalysis. Complex I functions in the transfer of electrons from NADH to the respiratory chain. The immediate electron acceptor for the enzyme is believed to be ubiquinone. This Ovophis okinavensis (Ryukyu Island pit viper) protein is NADH-ubiquinone oxidoreductase chain 4 (MT-ND4).